Consider the following 252-residue polypeptide: Type III pantothenate kinase (252 aa).

Position 6–13 (6–13 (DIGNTSTA)) interacts with ATP. 104-107 (GADR) is a binding site for substrate. Residue D106 is the Proton acceptor of the active site. Residue D128 participates in K(+) binding. T131 is an ATP binding site. T183 serves as a coordination point for substrate.

Belongs to the type III pantothenate kinase family. As to quaternary structure, homodimer. It depends on NH4(+) as a cofactor. K(+) serves as cofactor.

It localises to the cytoplasm. It carries out the reaction (R)-pantothenate + ATP = (R)-4'-phosphopantothenate + ADP + H(+). It functions in the pathway cofactor biosynthesis; coenzyme A biosynthesis; CoA from (R)-pantothenate: step 1/5. Its function is as follows. Catalyzes the phosphorylation of pantothenate (Pan), the first step in CoA biosynthesis. This chain is Type III pantothenate kinase, found in Thermus thermophilus (strain ATCC BAA-163 / DSM 7039 / HB27).